We begin with the raw amino-acid sequence, 446 residues long: sn-2 acyl-lipid omega-3 desaturase (ferredoxin), chloroplastic (446 aa).

Residues 1 to 65 constitute a chloroplast transit peptide; sequence MANLVLSECG…DGFTRNWALN (65 aa). Helical transmembrane passes span 118 to 138 and 141 to 161; these read LSYV…AAYL and WIVW…LFVL. A Histidine box-1 motif is present at residues 163–167; it reads HDCGH. The Histidine box-2 signature appears at 199–203; the sequence is HRTHH. 3 helical membrane passes run 231-250, 279-299, and 302-322; these read RFFR…YLWA, TACW…IGPI, and LKLY…VTYL. A Histidine box-3 motif is present at residues 366–370; sequence HVIHH.

This sequence belongs to the fatty acid desaturase type 1 family. Most abundant in leaves and seedlings.

It is found in the plastid. The protein localises to the chloroplast inner membrane. The enzyme catalyses a (7Z,10Z)-hexadecadienoyl-containing glycerolipid + 2 reduced [2Fe-2S]-[ferredoxin] + O2 + 2 H(+) = a (7Z,10Z,13Z)-hexadecatrienoyl-containing glycerolipid + 2 oxidized [2Fe-2S]-[ferredoxin] + 2 H2O. It carries out the reaction a (9Z,12Z)-octadecadienoyl-containing glycerolipid + 2 reduced [2Fe-2S]-[ferredoxin] + O2 + 2 H(+) = (9Z,12Z,15Z)-octadecatrienoyl-containing glycerolipid + 2 oxidized [2Fe-2S]-[ferredoxin] + 2 H2O. The protein operates within lipid metabolism; polyunsaturated fatty acid biosynthesis. Chloroplast omega-3 fatty acid desaturase introduces the third double bond in the biosynthesis of 16:3 and 18:3 fatty acids, important constituents of plant membranes. It is thought to use ferredoxin as an electron donor and to act on fatty acids esterified to galactolipids, sulfolipids and phosphatidylglycerol. The chain is sn-2 acyl-lipid omega-3 desaturase (ferredoxin), chloroplastic from Arabidopsis thaliana (Mouse-ear cress).